The following is a 713-amino-acid chain: Mitochondrial intermediate peptidase (713 aa).

The N-terminal 35 residues, M1–R35, are a transit peptide targeting the mitochondrion. An N6-acetyllysine modification is found at K126. H495 is a Zn(2+) binding site. E496 is a catalytic residue. Residues H499 and H502 each contribute to the Zn(2+) site.

Belongs to the peptidase M3 family. Monomer. The cofactor is Zn(2+).

It localises to the mitochondrion matrix. It catalyses the reaction Release of an N-terminal octapeptide as second stage of processing of some proteins imported into the mitochondrion.. With respect to regulation, activity is divalent cation-dependent. It is stimulated by manganese, magnesium or calcium ions and reversibly inhibited by zinc, cobalt and iron. In terms of biological role, cleaves proteins, imported into the mitochondrion, to their mature size. This chain is Mitochondrial intermediate peptidase (MIPEP), found in Homo sapiens (Human).